A 400-amino-acid chain; its full sequence is Putative cytochrome P450 141 (400 aa).

The next 2 membrane-spanning stretches (helical) occupy residues 225 to 245 (VVGMLLTVVIGGVDTPIAVIT) and 294 to 314 (VVIAGTALSAGSPAFTSITSA). Cys-346 lines the heme pocket.

This sequence belongs to the cytochrome P450 family. Heme is required as a cofactor.

The protein resides in the cell membrane. This chain is Putative cytochrome P450 141 (cyp141), found in Mycobacterium tuberculosis (strain CDC 1551 / Oshkosh).